We begin with the raw amino-acid sequence, 219 residues long: MSGLSGPPARRGPFPLALLLLFLLGPRLVLAISFHLPINSRKCLREEIHKDLLVTGAYEISDQSGGAGGLRSHLKITDSAGHILYSKEDATKGKFAFTTEDYDMFEVCFESKGTGRIPDQLVILDMKHGVEAKNYEEIAKVEKLKPLEVELRRLEDLSESIVNDFAYMKKREEEMRDTNESTNTRVLYFSIFSMFCLIGLATWQVFYLRRFFKAKKLIE.

The signal sequence occupies residues 1–31; it reads MSGLSGPPARRGPFPLALLLLFLLGPRLVLA. Positions 1–142 are required for interaction with STX17; that stretch reads MSGLSGPPAR…KNYEEIAKVE (142 aa). The Lumenal segment spans residues 32–185; that stretch reads ISFHLPINSR…RDTNESTNTR (154 aa). A GOLD domain is found at 41–193; it reads RKCLREEIHK…TRVLYFSIFS (153 aa). Residues 147-178 are required for TMED10 and TMED2 cis-Golgi network localization; that stretch reads LEVELRRLEDLSESIVNDFAYMKKREEEMRDT. Residues R171 and R176 each carry the dimethylated arginine modification. A glycan (N-linked (GlcNAc...) asparagine) is linked at N179. The chain crosses the membrane as a helical span at residues 186–206; sequence VLYFSIFSMFCLIGLATWQVF. The interval 204-219 is interaction with COPG1; sequence QVFYLRRFFKAKKLIE. Residues 207–219 lie on the Cytoplasmic side of the membrane; that stretch reads YLRRFFKAKKLIE. Residues 207 to 219 are interaction with ARF1 and IL1B; that stretch reads YLRRFFKAKKLIE. Residues 211 to 212 carry the COPII vesicle coat-binding motif; it reads FF. Residues 211 to 219 carry the COPI vesicle coat-binding motif; it reads FFKAKKLIE.

This sequence belongs to the EMP24/GP25L family. As to quaternary structure, predominantly dimeric and to a lesser extent monomeric in the ER. Monomer and dimer in ERGIC and cis-Golgi network. Forms homooligomer (via GOLD domain); the assembly is promoted by direct binding with leaderless cargos and may form a protein channel that facilitates cargo entry into the ERGIC. Forms heterooligomeric complexes with other members of the p24 family such as TMED2, TMED7 and TMED9. Interacts (via GOLD domain) with TMED2 (via GOLD domain); the complex is required for export of TMED10 from the ER to the cis-Golgi network; the complex is proposed to be involved in cis-Golgi network dynamics and / or biogenesis. Associates with the COPI vesicle coat subunits (coatomer). Tetramerization of the cytoplasmic domain at the Golgi membrane in vitro; the complex is proposed to interact with COPI coatomer and induce budding of the vesicles. Interacts with COPG1; the interaction involves TMED10 homodimer. Interacts with ARF1 (GDP-bound); the interaction probably involves a TMED10 oligomer. Interacts with SEC23A, SEC24B, SEC24C and SEC24D components of the coat protein complex II/COPII, indicative of an association of TMED10 with the COPII vesicle coat. Interacts with CD59. Interacts with MPPE1/PGAP5; the complex might recruit and sort GPI-anchored proteins to the ER-exit site, or the interaction might lead to recycling of PGAP5 between the ER and the Golgi. Interacts with F2LR1/PAR2. Interacts with KDELR2/ERD2; the interaction is disrupted by KDELR2 ligand. Found in a complex composed at least of SURF4, TMED2 and TMED10. Associates with the presenilin-dependent gamma-secretase complex. Interacts with STX17; the interaction is direct. Interacts with IL-1; the interaction is direct. Interacts with RAB21 (active GTP-bound form); the interaction is indirect and regulates TMED10 abundance and localization at the Golgi.

The protein localises to the endoplasmic reticulum membrane. It localises to the endoplasmic reticulum-Golgi intermediate compartment membrane. It is found in the golgi apparatus membrane. Its subcellular location is the golgi apparatus. The protein resides in the cis-Golgi network membrane. The protein localises to the trans-Golgi network membrane. It localises to the cytoplasmic vesicle. It is found in the secretory vesicle membrane. Its subcellular location is the cell membrane. The protein resides in the melanosome. Functionally, cargo receptor involved in protein vesicular trafficking and quality control in the endoplasmic reticulum (ER) and Golgi. The p24 protein family is a group of transmembrane proteins that bind coat protein complex I/COPI and coat protein complex II/COPII involved in vesicular trafficking between the membranes. Acts at the lumenal side for incorporation of secretory cargo molecules into transport vesicles and involved in vesicle coat formation at the cytoplasmic side. Mainly functions in the early secretory pathway and cycles between the ER, ER-Golgi intermediate compartment (ERGIC) and Golgi, mediating cargo transport through COPI and COPII-coated vesicles. In COPII vesicle-mediated anterograde transport, involved in the transport of GPI-anchored proteins by acting together with TMED2 as their cargo receptor; the function specifically implies SEC24C and SEC24D of the COPII vesicle coat and lipid raft-like microdomains of the ER. Recognizes GPI anchors structural remodeled in the ER by the GPI inositol-deacylase/PGAP1 and the metallophosphoesterase MPPE1/PGAP5. In COPI vesicle-mediated retrograde transport, involved in the biogenesis of COPI vesicles and vesicle coat recruitment. Involved in trafficking of amyloid beta A4 protein and soluble APP-beta release (independent from the modulation of gamma-secretase activity). Involved in the KDELR2-mediated retrograde transport of the toxin A subunit (CTX-A-K63)together with COPI and the COOH terminus of KDELR2. On Golgi membranes, acts as a primary receptor for ARF1-GDP, a GTP-binding protein involved in COPI-vesicle formation. Increases coatomer-dependent GTPase-activating activity of ARFGAP2 which mediates the hydrolysis of ARF1-bound GTP and therefore modulates protein trafficking from the Golgi apparatus. Involved in the exocytic trafficking of G protein-coupled receptors F2LR1/PAR2 (trypsin and tryspin-like enzyme receptor), OPRM1 (opioid receptor) and P2RY4 (UTD and UDP receptor) from the Golgi to the plasma membrane, thus contributing to receptor resensitization. In addition to its cargo receptor activity, may also act as a protein channel after oligomerization, facilitating the post-translational entry of leaderless cytoplasmic cargo into the ERGIC. Involved in the translocation into ERGIC, the vesicle entry and the secretion of leaderless cargos (lacking the secretion signal sequence), including the mature form of interleukin 1/IL-1 family members, the alpha-crystallin B chain HSPB5, the carbohydrate-binding proteins galectin-1/LGALS1 and galectin-3/LGALS3, the microtubule-associated protein Tau/MAPT, and the annexin A1/ANXA1; the translocation process is dependent on cargo protein unfolding and enhanced by chaperones HSP90AB1 and HSP90B1/GRP9. Could also associates with the presenilin-dependent gamma-secretase complex in order to regulate gamma-cleavages of the amyloid beta A4 protein to yield amyloid-beta 40/Abeta40. This is Transmembrane emp24 domain-containing protein 10 from Homo sapiens (Human).